A 210-amino-acid polypeptide reads, in one-letter code: Mitochondrial cardiolipin hydrolase (210 aa).

The Mitochondrial intermembrane segment spans residues 1-6; that stretch reads MLLWGR. The chain crosses the membrane as a helical span at residues 7–24; it reads WKVVAGLAGLALSLELLL. Residues 25–210 lie on the Cytoplasmic side of the membrane; it reads RYMRRRKPIR…YDFFPEKENK (186 aa). A PLD phosphodiesterase domain is found at 138–165; it reads SSGYMHHKFAVVDGTVVLTGSLNWTVQA. Residues His143, Lys145, and Asp150 contribute to the active site.

This sequence belongs to the phospholipase D family. MitoPLD/Zucchini subfamily. Homodimer.

It localises to the mitochondrion outer membrane. The catalysed reaction is a cardiolipin + H2O = a 1,2-diacyl-sn-glycero-3-phospho-(1'-sn-glycerol) + a 1,2-diacyl-sn-glycero-3-phosphate + H(+). Presents phospholipase and nuclease activities, depending on the different physiological conditions. Plays a key role in mitochondrial fusion and fission via its phospholipase activity. In its phospholipase role, it uses the mitochondrial lipid cardiolipin as substrate to generate phosphatidate (PA or 1,2-diacyl-sn-glycero-3-phosphate), a second messenger signaling lipid. Production of PA facilitates Mitofusin-mediated fusion, whereas the cleavage of PA by the Lipin family of phosphatases produces diacylgycerol (DAG) which promotes mitochondrial fission. Regulates mitochondrial shape through facilitating mitochondrial fusion. During spermatogenesis, plays a critical role in PIWI-interacting RNA (piRNA) biogenesis. piRNAs provide essential protection against the activity of mobile genetic elements. piRNA-mediated transposon silencing is thus critical for maintaining genome stability, in particular in germline cells when transposons are mobilized as a consequence of wide-spread genomic demethylation. Has been shown to be a backbone-non-specific, single strand-specific nuclease, cleaving either RNA or DNA substrates with similar affinity. Produces 5' phosphate and 3' hydroxyl termini, suggesting it could directly participate in the processing of primary piRNA transcripts. Has been proposed to act as a cardiolipin hydrolase to generate phosphatidic acid at mitochondrial surface. Although it cannot be excluded that it can act as a phospholipase in some circumstances, this activity could not be confirmed. In Xenopus tropicalis (Western clawed frog), this protein is Mitochondrial cardiolipin hydrolase (pld6).